Here is a 541-residue protein sequence, read N- to C-terminus: Protein wntless homolog (541 aa).

Over Met1–Cys15 the chain is Cytoplasmic. A helical membrane pass occupies residues Ile16–Ala36. The Lumenal portion of the chain corresponds to Pro37 to Lys232. The interval Met101–Lys232 is interaction with Wnt proteins. The helical transmembrane segment at Val233–Trp253 threads the bilayer. At Arg254–Lys268 the chain is on the cytoplasmic side. Residues Val269–Ile289 form a helical membrane-spanning segment. At Gly290–Arg303 the chain is on the lumenal side. The chain crosses the membrane as a helical span at residues Gln304–Met324. Residues Asp325 to His331 lie on the Cytoplasmic side of the membrane. A helical transmembrane segment spans residues Ile332–Phe352. The Lumenal segment spans residues Asp353–Ala380. A helical membrane pass occupies residues Phe381–Phe401. Residues Gln402–Arg431 lie on the Cytoplasmic side of the membrane. Residues Phe432–Val452 traverse the membrane as a helical segment. Residues Ser453 to Ser471 are Lumenal-facing. A helical transmembrane segment spans residues Ala472–Tyr492. The Cytoplasmic portion of the chain corresponds to Ala493 to Glu541.

This sequence belongs to the wntless family. As to quaternary structure, interacts with WNT3A. Interacts with WNT1, WNT3 and WNT5A.

The protein resides in the golgi apparatus membrane. Its subcellular location is the cytoplasmic vesicle membrane. The protein localises to the cell membrane. It localises to the endoplasmic reticulum membrane. It is found in the early endosome membrane. Regulates Wnt proteins sorting and secretion in a feedback regulatory mechanism. This reciprocal interaction plays a key role in the regulation of expression, subcellular location, binding and organelle-specific association of Wnt proteins. Also plays an important role in establishment of the anterior-posterior body axis formation during development. This is Protein wntless homolog (WLS) from Pongo abelii (Sumatran orangutan).